The primary structure comprises 218 residues: Probable nicotinate-nucleotide adenylyltransferase (218 aa).

This sequence belongs to the NadD family.

It carries out the reaction nicotinate beta-D-ribonucleotide + ATP + H(+) = deamido-NAD(+) + diphosphate. It functions in the pathway cofactor biosynthesis; NAD(+) biosynthesis; deamido-NAD(+) from nicotinate D-ribonucleotide: step 1/1. In terms of biological role, catalyzes the reversible adenylation of nicotinate mononucleotide (NaMN) to nicotinic acid adenine dinucleotide (NaAD). The polypeptide is Probable nicotinate-nucleotide adenylyltransferase (Helicobacter hepaticus (strain ATCC 51449 / 3B1)).